Consider the following 382-residue polypeptide: Cytochrome b (382 aa).

4 helical membrane passes run 28-48 (YGFL…FLAS), 72-94 (WCFR…LHIL), 107-127 (SWIS…IGYV), and 169-189 (FFVL…IHIF). Heme b is bound by residues H78 and H92. Positions 173 and 187 each coordinate heme b. An a ubiquinone-binding site is contributed by H192. A run of 4 helical transmembrane segments spans residues 214-234 (LLSL…LQSI), 274-294 (IPSK…LFLL), 317-337 (VPMI…CQLP), and 340-360 (IFIL…LFAL).

Belongs to the cytochrome b family. In terms of assembly, the main subunits of complex b-c1 are: cytochrome b, cytochrome c1 and the Rieske protein. Heme b is required as a cofactor.

Its subcellular location is the mitochondrion inner membrane. In terms of biological role, component of the ubiquinol-cytochrome c reductase complex (complex III or cytochrome b-c1 complex) that is part of the mitochondrial respiratory chain. The b-c1 complex mediates electron transfer from ubiquinol to cytochrome c. Contributes to the generation of a proton gradient across the mitochondrial membrane that is then used for ATP synthesis. The protein is Cytochrome b (MT-CYB) of Plasmodium vivax (strain Salvador I).